A 329-amino-acid polypeptide reads, in one-letter code: GDP-mannose transporter (329 aa).

The Cytoplasmic portion of the chain corresponds to 1–11 (MADKGSVAAKS). The helical transmembrane segment at 12 to 32 (LTNSAPLSIFSYCAASILMTV) threads the bilayer. The Lumenal portion of the chain corresponds to 33–40 (TNKYAVSG). The chain crosses the membrane as a helical span at residues 41–61 (VDFNFNFFLLAVQGIVCITLI). Residues 62-83 (SSLKQLNVITFREFNKVEAKKW) are Cytoplasmic-facing. The helical transmembrane segment at 84–104 (FPIAVLLVVMIYTSSKALQYL) threads the bilayer. Residues 105–107 (SIP) lie on the Lumenal side of the membrane. The helical transmembrane segment at 108–128 (IYTIFKNLTIILIAYGEVIWF) threads the bilayer. The Cytoplasmic portion of the chain corresponds to 129-131 (GGR). The chain crosses the membrane as a helical span at residues 132 to 152 (VTNLALGSFVLMVLSSAVASY). Topologically, residues 153–163 (GDSNVDTGKLN) are lumenal. A helical membrane pass occupies residues 164–184 (FNIGYFWMFTNCFSSAAFVLF). Topologically, residues 185–196 (MRKRIKLTNFKD) are cytoplasmic. A helical membrane pass occupies residues 197–217 (FDTMYYNNLLSIPILLFASLT). At 218–237 (TEDWSAKNIAQNFPEDTKYA) the chain is on the lumenal side. Residues 238–258 (VIASMIISGMSAVGISYTSAW) traverse the membrane as a helical segment. The Cytoplasmic portion of the chain corresponds to 259–266 (CVRVTSST). Residues 267 to 287 (TYSMVGALNKLPIALSGLLFF) traverse the membrane as a helical segment. Topologically, residues 288-290 (KAP) are lumenal. The chain crosses the membrane as a helical span at residues 291–311 (INFYSISSIFIGFAAGLVYAI). Over 312 to 329 (AKQKQKKEDELQLPTDKS) the chain is Cytoplasmic.

This sequence belongs to the TPT transporter family. SLC35D subfamily. In terms of assembly, homooligomer.

The protein localises to the golgi apparatus membrane. It localises to the cytoplasmic vesicle membrane. Its subcellular location is the endoplasmic reticulum membrane. Functionally, involved in the import of GDP-mannose from the cytoplasm into the Golgi lumen. This chain is GDP-mannose transporter (VIG4), found in Komagataella pastoris (Yeast).